The primary structure comprises 231 residues: 2,3-bisphosphoglycerate-dependent phosphoglycerate mutase (231 aa).

Residues 10-17, 23-24, arginine 62, 89-92, lysine 100, 116-117, and 185-186 contribute to the substrate site; these read RHGQSEWN, TG, ERHY, RR, and GN. The active-site Tele-phosphohistidine intermediate is the histidine 11. Catalysis depends on glutamate 89, which acts as the Proton donor/acceptor.

The protein belongs to the phosphoglycerate mutase family. BPG-dependent PGAM subfamily. Homodimer.

It catalyses the reaction (2R)-2-phosphoglycerate = (2R)-3-phosphoglycerate. The protein operates within carbohydrate degradation; glycolysis; pyruvate from D-glyceraldehyde 3-phosphate: step 3/5. Functionally, catalyzes the interconversion of 2-phosphoglycerate and 3-phosphoglycerate. This is 2,3-bisphosphoglycerate-dependent phosphoglycerate mutase from Buchnera aphidicola subsp. Acyrthosiphon pisum (strain APS) (Acyrthosiphon pisum symbiotic bacterium).